The following is a 73-amino-acid chain: Disintegrin trigramin-beta-2 (73 aa).

The Disintegrin domain maps to 1–73 (EAGKDCDCGS…AGCPRNPFHA (73 aa)). Cystine bridges form between Cys6–Cys21, Cys8–Cys16, Cys15–Cys38, Cys29–Cys35, Cys34–Cys59, and Cys47–Cys66. Positions 51–53 (RGD) match the Cell attachment site motif.

It belongs to the venom metalloproteinase (M12B) family. P-II subfamily. P-IIa sub-subfamily. As to quaternary structure, monomer (disintegrin). In terms of tissue distribution, expressed by the venom gland.

Its subcellular location is the secreted. Its function is as follows. Inhibits fibrinogen interaction with platelets. Acts by binding to the alpha-IIb/beta-3 receptor (ITGA2B/ITGB3) on the platelet surface and inhibits aggregation induced by ADP, thrombin, platelet-activating factor and collagen. This is Disintegrin trigramin-beta-2 from Craspedocephalus gramineus (Bamboo pit viper).